Consider the following 266-residue polypeptide: ATP synthase subunit a (266 aa).

7 consecutive transmembrane segments (helical) span residues 28–48, 90–110, 125–145, 158–178, 187–207, 216–236, and 239–259; these read ISFTNSALWMVIAMAALAIFM, LIFTLFMFILFANLLGLVPLF, VTVTATLAAIAFGTVLVVGFT, HGTPMALIWLIPGIEAFSFIL, LFVAMTAGHVLLEVLANFIVN, AFLAGYYTLVGIPTFLLMIGI, and LEFLVCAIQAYVFALLTSLYL.

It belongs to the ATPase A chain family. As to quaternary structure, F-type ATPases have 2 components, CF(1) - the catalytic core - and CF(0) - the membrane proton channel. CF(1) has five subunits: alpha(3), beta(3), gamma(1), delta(1), epsilon(1). CF(0) has three main subunits: a(1), b(2) and c(9-12). The alpha and beta chains form an alternating ring which encloses part of the gamma chain. CF(1) is attached to CF(0) by a central stalk formed by the gamma and epsilon chains, while a peripheral stalk is formed by the delta and b chains.

Its subcellular location is the cell inner membrane. Functionally, key component of the proton channel; it plays a direct role in the translocation of protons across the membrane. This Zymomonas mobilis subsp. mobilis (strain ATCC 31821 / ZM4 / CP4) protein is ATP synthase subunit a.